We begin with the raw amino-acid sequence, 167 residues long: Phosphopantetheine adenylyltransferase (167 aa).

Position 9 (Ser-9) interacts with substrate. Residues 9–10 (SF) and His-17 contribute to the ATP site. Lys-41, Leu-73, and Lys-87 together coordinate substrate. ATP is bound by residues 88–90 (GLR), Glu-98, and 123–129 (YSYLSSS).

This sequence belongs to the bacterial CoaD family. In terms of assembly, homohexamer. Requires Mg(2+) as cofactor.

Its subcellular location is the cytoplasm. The catalysed reaction is (R)-4'-phosphopantetheine + ATP + H(+) = 3'-dephospho-CoA + diphosphate. It functions in the pathway cofactor biosynthesis; coenzyme A biosynthesis; CoA from (R)-pantothenate: step 4/5. In terms of biological role, reversibly transfers an adenylyl group from ATP to 4'-phosphopantetheine, yielding dephospho-CoA (dPCoA) and pyrophosphate. This Caldicellulosiruptor bescii (strain ATCC BAA-1888 / DSM 6725 / KCTC 15123 / Z-1320) (Anaerocellum thermophilum) protein is Phosphopantetheine adenylyltransferase.